An 854-amino-acid chain; its full sequence is MSTKPELKRFEQFGEMMVQLYERYLPTAFDESLTLLEKMNKIIHYLNEIGKVTNELIEEWNKVMEWILNDGLEDLVKETLERWYEEGKFADLVIQVIDELKQFGVSVKTYGAKGDGVTDDIRAFEKAIESGFPVYVPYGTFMVSRGIKLPSNTVLTGAGKRNAVIKFMDSVGRGESLMYNQNVTTGNENIFLSSFTLDGNNKRLGQGISGIGGSRESNLSIRACHNVYIRDIEAVDCTLHGIDITCGGLDYPYLGDGTTAPNPSENIWIENCEATGFGDDGITTHHSQYINILNCYSHDPRLTANCNGFEIDDGSRHVVLSNNRSKGCYGGIEIKAHGDAPAAYNISINGHMSVEDVRSYNFRHIGHHAATDPQSVSAKNIVASNLVSIRPNNKRGFQDNATPRVLAVSAYYGVVINGLTGYTDDPNLLTETVVSVQFRARNCSLNGVGLTGFSNSDNGIYVIGGSRGGDAVNISNVTLNNSGRYGVSIGSGIENVSITNISGIGDGINSPVALVSTINSNPEISGLSSIGYPTAARVAGTDYNDGLTLFNGAFRASTTSSGKIHSEGFIMGSTSGCEASVSKSGVLTSSSSKTSSERSLIAGSSTSEAKGTYNTILGSLGAVADEQFAALISASQSRASGNHNLILSSYGINTTGSYKVNGGFEKINWELDSLNGRIKARDTVTGGNTWSDFAEYFESLDGQVIETGYLVTLEKGKIRKAEKGEKIIGVISETAGFVLGESSFEWQGAVLKNEFGGIIYEEVTTEDGVKFKRPLPSPDFDPNKNYIPRSQRREWHVVGLLGQIAVRIDETVKQGHGIDAVGGVATDGDNFIVQEITTPYTKEKGYGVAIVLVK.

Mg(2+)-binding residues include H285, E310, and D312. E695 acts as the Nucleophile in catalysis. 746–795 (WQGAVLKNEFGGIIYEEVTTEDGVKFKRPLPSPDFDPNKNYIPRSQRREW) is a binding site for ATP.

Homotrimer. Each appendage is a homotrimer of gp12*. Requires Mg(2+) as cofactor. Post-translationally, autocleaved to produce the 74 kDa gp12* assembly attached to the phage particles. Autocleavage of the C-terminus is a posttrimerization event that is followed by an ATP-dependent release.

Its subcellular location is the virion. Its function is as follows. Structural component of the 12 appendages that hang from the lower collar. Adhesion protein that binds to the host cell surface during virus attachment and mediates teichoic acids degradation. This chain is Pre-neck appendage protein (12), found in Bacillus phage phi29 (Bacteriophage phi-29).